Consider the following 360-residue polypeptide: Phosphoserine aminotransferase (360 aa).

R41 contacts L-glutamate. Pyridoxal 5'-phosphate-binding residues include W101, T152, D172, and Q195. K196 bears the N6-(pyridoxal phosphate)lysine mark. Position 237 to 238 (237 to 238 (NT)) interacts with pyridoxal 5'-phosphate.

This sequence belongs to the class-V pyridoxal-phosphate-dependent aminotransferase family. SerC subfamily. In terms of assembly, homodimer. Pyridoxal 5'-phosphate serves as cofactor.

It is found in the cytoplasm. The enzyme catalyses O-phospho-L-serine + 2-oxoglutarate = 3-phosphooxypyruvate + L-glutamate. It carries out the reaction 4-(phosphooxy)-L-threonine + 2-oxoglutarate = (R)-3-hydroxy-2-oxo-4-phosphooxybutanoate + L-glutamate. It functions in the pathway amino-acid biosynthesis; L-serine biosynthesis; L-serine from 3-phospho-D-glycerate: step 2/3. It participates in cofactor biosynthesis; pyridoxine 5'-phosphate biosynthesis; pyridoxine 5'-phosphate from D-erythrose 4-phosphate: step 3/5. Functionally, catalyzes the reversible conversion of 3-phosphohydroxypyruvate to phosphoserine and of 3-hydroxy-2-oxo-4-phosphonooxybutanoate to phosphohydroxythreonine. The polypeptide is Phosphoserine aminotransferase (Burkholderia ambifaria (strain MC40-6)).